A 611-amino-acid chain; its full sequence is Autophagy-related protein 22-2 (611 aa).

A disordered region spans residues 1–24 (MRADDNPSARSLHAQFPGDDTRPT). Residues 35–55 (YGWAAEVFTVCAMGSFLPITL) form a helical membrane-spanning segment. N-linked (GlcNAc...) asparagine glycosylation occurs at N78. 3 helical membrane passes run 116-136 (TASF…VLII), 151-171 (LLVA…SVVP), and 175-195 (IVGA…FVLL). N221 carries N-linked (GlcNAc...) asparagine glycosylation. 2 helical membrane passes run 286 to 306 (IGIG…VIIA) and 316 to 336 (LVLF…ALWL). The N-linked (GlcNAc...) asparagine glycan is linked to N353. Helical transmembrane passes span 380 to 400 (ILLF…VSGT), 414 to 434 (AALG…AFSW), 449 to 469 (IIAC…GFVP), 483 to 503 (WEMF…SSYC), 521 to 541 (ALYA…VGLI), and 551 to 571 (AFVF…LVDV).

The protein belongs to the ATG22 family.

The protein localises to the vacuole membrane. Its function is as follows. Vacuolar effluxer which mediate the efflux of amino acids resulting from autophagic degradation. The release of autophagic amino acids allows the maintenance of protein synthesis and viability during nitrogen starvation. This Aspergillus clavatus (strain ATCC 1007 / CBS 513.65 / DSM 816 / NCTC 3887 / NRRL 1 / QM 1276 / 107) protein is Autophagy-related protein 22-2 (atg22-2).